The sequence spans 283 residues: Bifunctional protein FolD (283 aa).

Residues 164 to 166 and Ser-189 contribute to the NADP(+) site; that span reads GRS.

The protein belongs to the tetrahydrofolate dehydrogenase/cyclohydrolase family. In terms of assembly, homodimer.

The catalysed reaction is (6R)-5,10-methylene-5,6,7,8-tetrahydrofolate + NADP(+) = (6R)-5,10-methenyltetrahydrofolate + NADPH. It catalyses the reaction (6R)-5,10-methenyltetrahydrofolate + H2O = (6R)-10-formyltetrahydrofolate + H(+). It functions in the pathway one-carbon metabolism; tetrahydrofolate interconversion. Its function is as follows. Catalyzes the oxidation of 5,10-methylenetetrahydrofolate to 5,10-methenyltetrahydrofolate and then the hydrolysis of 5,10-methenyltetrahydrofolate to 10-formyltetrahydrofolate. In Lactobacillus acidophilus (strain ATCC 700396 / NCK56 / N2 / NCFM), this protein is Bifunctional protein FolD.